The sequence spans 37 residues: Photosystem II reaction center protein T (37 aa).

A helical transmembrane segment spans residues 3–23 (ALVYTFLLVGTLGIIFFAIFF).

This sequence belongs to the PsbT family. In terms of assembly, PSII is composed of 1 copy each of membrane proteins PsbA, PsbB, PsbC, PsbD, PsbE, PsbF, PsbH, PsbI, PsbJ, PsbK, PsbL, PsbM, PsbT, PsbY, PsbZ, Psb30/Ycf12, at least 3 peripheral proteins of the oxygen-evolving complex and a large number of cofactors. It forms dimeric complexes.

It localises to the plastid. It is found in the chloroplast thylakoid membrane. Functionally, found at the monomer-monomer interface of the photosystem II (PS II) dimer, plays a role in assembly and dimerization of PSII. PSII is a light-driven water plastoquinone oxidoreductase, using light energy to abstract electrons from H(2)O, generating a proton gradient subsequently used for ATP formation. The polypeptide is Photosystem II reaction center protein T (Spirogyra maxima (Green alga)).